We begin with the raw amino-acid sequence, 618 residues long: Cationic amino acid transporter 3 (618 aa).

Residues 1–36 (MLWQALRRFGQKLVRRRVLELGMGETRLARCLSTLD) lie on the Cytoplasmic side of the membrane. The helical transmembrane segment at 37-57 (LVALGVGSTLGAGVYVLAGEV) threads the bilayer. Residues 58–61 (AKDK) lie on the Extracellular side of the membrane. The chain crosses the membrane as a helical span at residues 62-82 (AGPSIVICFLVAALSSVLAGL). The Cytoplasmic segment spans residues 83–107 (CYAEFGARVPGSGSAYLYSYVTVGE). The helical transmembrane segment at 108–128 (LWAFTTGWNLILSYVIGTASV) threads the bilayer. At 129–162 (ARAWSSAFDNLIGNHISRTLKGTILLKMPHVLAE) the chain is on the extracellular side. A helical transmembrane segment spans residues 163-183 (YPDFFALALVLLLTGLLVLGA). The Cytoplasmic segment spans residues 184-191 (SKSALVTK). Residues 192 to 212 (VFTGMNLLVLSFVIISGFIKG) form a helical membrane-spanning segment. Topologically, residues 213–244 (ELRNWKLTKEDYCLTMSESNGTCSLDSMGSGG) are extracellular. N-linked (GlcNAc...) asparagine glycosylation occurs at Asn232. A helical membrane pass occupies residues 245-265 (FMPFGLEGILRGAATCFYAFV). Residues 266 to 285 (GFDCIATTGEEAQNPQRSIP) are Cytoplasmic-facing. A helical transmembrane segment spans residues 286–306 (MGIVISMFICFLAYFGVSSAL). Residues 307–335 (TLMMPYYKLHPESPLPEAFSYVGWEPARY) lie on the Extracellular side of the membrane. Residues 336–356 (LVAIGSLCALSTSLLGSMFPM) form a helical membrane-spanning segment. The Cytoplasmic segment spans residues 357 to 380 (PRVMYSMAEDGLLFRVLAKVHSVT). Residues 381–401 (HIPIVATLVSGVIAAFMAFLF) form a helical membrane-spanning segment. At 402-406 (ELTDL) the chain is on the extracellular side. The chain crosses the membrane as a helical span at residues 407–427 (VDLMSIGTLLAHSLVSICVLI). The Cytoplasmic segment spans residues 428–474 (LRYQPDQEMKSVEEEMELQEETLEAEKLTVQALFCPVNSIPTLLSGR). Residues 475–495 (VVYVCSSLLAVLLTVLCLVLT) form a helical membrane-spanning segment. At 496–506 (WWTTPLRSGDP) the chain is on the extracellular side. Residues 507 to 527 (VWVTVVVLILGLILAISGVIW) traverse the membrane as a helical segment. Over 528-539 (RQPQNRTPLHFK) the chain is Cytoplasmic. Residues 540 to 560 (VPAVPLLPLVSIFVNVYLMMQ) traverse the membrane as a helical segment. Residues 561–568 (MTAGTWAR) lie on the Extracellular side of the membrane. A helical transmembrane segment spans residues 569–589 (FGIWMLIGFAIYFGYGIQHSM). Residues 590 to 618 (KEVKNHQTLPKTRAQTIDLDLTTSCVHSI) lie on the Cytoplasmic side of the membrane. Thr605 carries the phosphothreonine modification. Ser617 is modified (phosphoserine).

The protein belongs to the amino acid-polyamine-organocation (APC) superfamily. Cationic amino acid transporter (CAT) (TC 2.A.3.3) family. In terms of processing, N-glycosylated. As to expression, expressed in adult brain and in a wide variety of embryonic tissues.

It is found in the cell membrane. It carries out the reaction L-arginine(in) = L-arginine(out). It catalyses the reaction L-lysine(in) = L-lysine(out). The enzyme catalyses L-ornithine(in) = L-ornithine(out). In terms of biological role, uniporter that mediates the uptake of cationic L-amino acids such as L-arginine, L-lysine and L-ornithine. The transport is sodium ions- and pH-independent, moderately trans-stimulated and is mediated by passive diffusion. The polypeptide is Cationic amino acid transporter 3 (Mus musculus (Mouse)).